A 357-amino-acid polypeptide reads, in one-letter code: Glutamyl endopeptidase (357 aa).

An N-terminal signal peptide occupies residues 1-29; sequence MKGKFLKVSSLFVATLTTATLVSSPAANA. A propeptide spanning residues 30–68 is cleaved from the precursor; it reads LSSKAMDNHPQQTQTDKQQTPKIQKGGNLKPLEQRERAN. A disordered region spans residues 33–58; it reads KAMDNHPQQTQTDKQQTPKIQKGGNL. Residues 40 to 54 show a composition bias toward low complexity; the sequence is QQTQTDKQQTPKIQK. Residues His-119, Asp-161, and Ser-237 each act as charge relay system in the active site. Residues 282–357 are disordered; sequence NFANDDHPNN…NNNSDNPDAA (76 aa). Repeat copies occupy residues 289–291, 292–294, 295–297, 298–300, 301–303, 304–306, 307–309, 310–312, 313–315, 316–318, 319–321, 322–324, 325–327, 328–330, 331–333, 337–339, 340–342, and 343–345. An 18 X 3 AA repeats of P-[DN]-N region spans residues 289 to 345; that stretch reads PNNPDNPDNPNNPDNPNNPDNPNNPDNPDNPNNPDNPNNPDNPNNPDQPNNPNNPDN. Positions 291 to 357 are enriched in low complexity; it reads NPDNPDNPNN…NNNSDNPDAA (67 aa).

The protein belongs to the peptidase S1B family. Proteolytically cleaved by aureolysin (aur). This cleavage leads to the activation of SspA.

It localises to the secreted. The catalysed reaction is Preferential cleavage: Glu-|-Xaa, Asp-|-Xaa.. Preferentially cleaves peptide bonds on the carboxyl-terminal side of aspartate and glutamate. Along with other extracellular proteases it is involved in colonization and infection of human tissues. Required for proteolytic maturation of thiol protease SspB and inactivation of SspC, an inhibitor of SspB. It is the most important protease for degradation of fibronectin-binding protein (FnBP) and surface protein A, which are involved in adherence to host cells. May also protect bacteria against host defense mechanism by cleaving the immunoglobulin classes IgG, IgA and IgM. May be involved in the stability of secreted lipases. The sequence is that of Glutamyl endopeptidase (sspA) from Staphylococcus aureus (strain MRSA252).